The sequence spans 74 residues: Translation initiation factor IF-1 (74 aa).

An S1-like domain is found at Met-1 to Lys-72.

Belongs to the IF-1 family. In terms of assembly, component of the 30S ribosomal translation pre-initiation complex which assembles on the 30S ribosome in the order IF-2 and IF-3, IF-1 and N-formylmethionyl-tRNA(fMet); mRNA recruitment can occur at any time during PIC assembly.

The protein localises to the cytoplasm. Functionally, one of the essential components for the initiation of protein synthesis. Stabilizes the binding of IF-2 and IF-3 on the 30S subunit to which N-formylmethionyl-tRNA(fMet) subsequently binds. Helps modulate mRNA selection, yielding the 30S pre-initiation complex (PIC). Upon addition of the 50S ribosomal subunit IF-1, IF-2 and IF-3 are released leaving the mature 70S translation initiation complex. The chain is Translation initiation factor IF-1 from Synechococcus sp. (strain JA-3-3Ab) (Cyanobacteria bacterium Yellowstone A-Prime).